Consider the following 423-residue polypeptide: G protein-activated inward rectifier potassium channel 2 (423 aa).

The Cytoplasmic portion of the chain corresponds to 1-89; that stretch reads MAKLTESMTN…IFTTLVDLKW (89 aa). Ser16 and Ser23 each carry phosphoserine. Residues 90–114 form a helical membrane-spanning segment; that stretch reads RFNLLIFVMVYTVTWLFFGMIWWLI. The Extracellular portion of the chain corresponds to 115–138; that stretch reads AYIRGDMDHIEDPSWTPCVTNLNG. The segment at residues 139–150 is an intramembrane region (helical; Pore-forming); the sequence is FVSAFLFSIETE. Positions 151–157 form an intramembrane region, pore-forming; the sequence is TTIGYGY. The short motif at 152–157 is the Selectivity filter element; the sequence is TIGYGY. Residues 158 to 166 lie on the Extracellular side of the membrane; the sequence is RVITDKCPE. Residues 167–188 form a helical membrane-spanning segment; it reads GIILLLIQSVLGSIVNAFMVGC. The Cytoplasmic portion of the chain corresponds to 189–423; the sequence is MFVKISQPKK…VANLENESKV (235 aa). Residues 390 to 423 form a disordered region; that stretch reads NQHAELETEEEEKNLEEQTERNGDVANLENESKV. The PDZ-binding signature appears at 420–423; it reads ESKV.

The protein belongs to the inward rectifier-type potassium channel (TC 1.A.2.1) family. KCNJ6 subfamily. As to quaternary structure, associates with KCNJ3/GIRK1 or KCNJ5/GRIK4 to form a G-protein-activated heteromultimer pore-forming unit. The resulting inward current is much larger. Interacts (via PDZ-binding motif) with SNX27 (via PDZ domain); the interaction is required when endocytosed to prevent degradation in lysosomes and promote recycling to the plasma membrane.

It is found in the membrane. The catalysed reaction is K(+)(in) = K(+)(out). With respect to regulation, activated by phosphatidylinositol 4,5 biphosphate (PtdIns(4,5)P2). Functionally, inward rectifier potassium channels are characterized by a greater tendency to allow potassium to flow into the cell rather than out of it. Their voltage dependence is regulated by the concentration of extracellular potassium; as external potassium is raised, the voltage range of the channel opening shifts to more positive voltages. The inward rectification is mainly due to the blockage of outward current by internal magnesium. This potassium channel may be involved in the regulation of insulin secretion by glucose and/or neurotransmitters acting through G-protein-coupled receptors. The sequence is that of G protein-activated inward rectifier potassium channel 2 (KCNJ6) from Pongo abelii (Sumatran orangutan).